We begin with the raw amino-acid sequence, 458 residues long: 5-hydroxytryptamine receptor 2C (458 aa).

A signal peptide spans 1 to 32 (MVNLRKAVHSFLVHLIGLLVWQCDISVSPVAA). Topologically, residues 33–55 (LVTDIFNTSDGGRFKFPDGVQNW) are extracellular. The chain crosses the membrane as a helical span at residues 56–80 (PALSIVIIIILTIGGNILVIMAVSL). Residues 81–86 (EKKLHN) lie on the Cytoplasmic side of the membrane. A helical membrane pass occupies residues 87–111 (ATNYFLMSLAIADMLVGLLVMPLSL). Residues 112-128 (LAILYDYVWPLPRYLCP) lie on the Extracellular side of the membrane. C127 and C207 are disulfide-bonded. A helical transmembrane segment spans residues 129-151 (VWISLDVLFSTASIMHLCAISLD). An ergotamine-binding site is contributed by T139. The short motif at 151-153 (DRY) is the DRY motif; important for ligand-induced conformation changes element. At 152–167 (RYVAIRNPVEHSRFNS) the chain is on the cytoplasmic side. The helical transmembrane segment at 168 to 189 (RTKAIMKIAIVWAISIGVSVPI) threads the bilayer. Over 190-213 (PVIGLRDEEKVFVNNTTCVLNDPN) the chain is Extracellular. 2 N-linked (GlcNAc...) asparagine glycosylation sites follow: N203 and N204. L209 serves as a coordination point for ergotamine. Residues 214–236 (FVLIGSFVAFFIPLTIMVITYCL) form a helical membrane-spanning segment. Residues 237–311 (TIHVLRRQAL…AINNERKASK (75 aa)) lie on the Cytoplasmic side of the membrane. A disordered region spans residues 272-301 (TEEENSANPNQDSNPRRRKKKERRPRGTMQ). Basic residues predominate over residues 287 to 297 (RRRKKKERRPR). A helical membrane pass occupies residues 312–336 (VLGIVFFVFLVMWCPFFITNILSVL). Residues C337 and C341 are joined by a disulfide bond. Residues 337–347 (CGKACNQKLME) lie on the Extracellular side of the membrane. A helical membrane pass occupies residues 348–370 (KLLNVFVWIGYVCSGINPLVYTL). Positions 364–368 (NPLVY) match the NPxxY motif; important for ligand-induced conformation changes and signaling motif. Topologically, residues 371 to 458 (FNKIYRRAFS…SVVSERISSV (88 aa)) are cytoplasmic. Residues 456–458 (SSV) carry the PDZ-binding motif.

Belongs to the G-protein coupled receptor 1 family. Interacts with MPDZ. Interacts with ARRB2. Interacts with MPP3; this interaction stabilizes the receptor at the plasma membrane and prevents the desensitization of the HTR2C receptor-mediated calcium response.

Its subcellular location is the cell membrane. In terms of biological role, G-protein coupled receptor for 5-hydroxytryptamine (serotonin). Also functions as a receptor for various drugs and psychoactive substances, including ergot alkaloid derivatives, 1-2,5,-dimethoxy-4-iodophenyl-2-aminopropane (DOI) and lysergic acid diethylamide (LSD). Ligand binding causes a conformation change that triggers signaling via guanine nucleotide-binding proteins (G proteins) and modulates the activity of downstream effectors. HTR2C is coupled to G(q)/G(11) G alpha proteins and activates phospholipase C-beta, releasing diacylglycerol (DAG) and inositol 1,4,5-trisphosphate (IP3) second messengers that modulate the activity of phosphatidylinositol 3-kinase and promote the release of Ca(2+) ions from intracellular stores, respectively. Beta-arrestin family members inhibit signaling via G proteins and mediate activation of alternative signaling pathways. Regulates neuronal activity via the activation of short transient receptor potential calcium channels in the brain, and thereby modulates the activation of pro-opiomelanocortin neurons and the release of CRH that then regulates the release of corticosterone. Plays a role in the regulation of appetite and eating behavior, responses to anxiogenic stimuli and stress. Plays a role in insulin sensitivity and glucose homeostasis. In Canis lupus familiaris (Dog), this protein is 5-hydroxytryptamine receptor 2C.